Consider the following 299-residue polypeptide: tRNA dimethylallyltransferase (299 aa).

Glycine 13 to threonine 20 is an ATP binding site. Threonine 15 to threonine 20 provides a ligand contact to substrate. Residues aspartate 38–glutamine 41 are interaction with substrate tRNA.

This sequence belongs to the IPP transferase family. In terms of assembly, monomer. It depends on Mg(2+) as a cofactor.

The catalysed reaction is adenosine(37) in tRNA + dimethylallyl diphosphate = N(6)-dimethylallyladenosine(37) in tRNA + diphosphate. Functionally, catalyzes the transfer of a dimethylallyl group onto the adenine at position 37 in tRNAs that read codons beginning with uridine, leading to the formation of N6-(dimethylallyl)adenosine (i(6)A). This is tRNA dimethylallyltransferase from Prochlorococcus marinus (strain SARG / CCMP1375 / SS120).